Consider the following 239-residue polypeptide: Octanoyltransferase (239 aa).

The 189-residue stretch at 48 to 236 (DGGDELVWLV…AFEAVFGETT (189 aa)) folds into the BPL/LPL catalytic domain. Substrate is bound by residues 87–94 (RGGEYTYH), 167–169 (ALG), and 180–182 (GLS). Cys-198 (acyl-thioester intermediate) is an active-site residue.

Belongs to the LipB family.

The protein resides in the cytoplasm. The enzyme catalyses octanoyl-[ACP] + L-lysyl-[protein] = N(6)-octanoyl-L-lysyl-[protein] + holo-[ACP] + H(+). It functions in the pathway protein modification; protein lipoylation via endogenous pathway; protein N(6)-(lipoyl)lysine from octanoyl-[acyl-carrier-protein]: step 1/2. Its function is as follows. Catalyzes the transfer of endogenously produced octanoic acid from octanoyl-acyl-carrier-protein onto the lipoyl domains of lipoate-dependent enzymes. Lipoyl-ACP can also act as a substrate although octanoyl-ACP is likely to be the physiological substrate. In Rhizobium johnstonii (strain DSM 114642 / LMG 32736 / 3841) (Rhizobium leguminosarum bv. viciae), this protein is Octanoyltransferase.